A 556-amino-acid chain; its full sequence is Endonuclease/exonuclease/phosphatase family domain-containing protein 1 (556 aa).

The HhH domain maps to E39–Y68.

This chain is Endonuclease/exonuclease/phosphatase family domain-containing protein 1 (eepd1), found in Xenopus laevis (African clawed frog).